The following is a 70-amino-acid chain: U-scutigerotoxin(02)-Tl1a (70 aa).

The first 17 residues, 1 to 17, serve as a signal peptide directing secretion; the sequence is MKYILLGLLLMVVLANA.

This sequence belongs to the scutigerotoxin-02 family. Contains 4 disulfide bonds. In terms of tissue distribution, expressed by the venom gland.

It localises to the secreted. The sequence is that of U-scutigerotoxin(02)-Tl1a from Thereuopoda longicornis (Long-legged centipede).